Here is a 422-residue protein sequence, read N- to C-terminus: L-threonine dehydratase biosynthetic IlvA (422 aa).

Position 56 is an N6-(pyridoxal phosphate)lysine (Lys-56). Residues Asn-83, 189–193 (GGGGL), and Ser-315 each bind pyridoxal 5'-phosphate. In terms of domain architecture, ACT-like spans 339–413 (HYFILNFPQR…FDPSNIYINE (75 aa)).

The protein belongs to the serine/threonine dehydratase family. Homotetramer. The cofactor is pyridoxal 5'-phosphate.

It catalyses the reaction L-threonine = 2-oxobutanoate + NH4(+). It participates in amino-acid biosynthesis; L-isoleucine biosynthesis; 2-oxobutanoate from L-threonine: step 1/1. In terms of biological role, catalyzes the anaerobic formation of alpha-ketobutyrate and ammonia from threonine in a two-step reaction. The first step involved a dehydration of threonine and a production of enamine intermediates (aminocrotonate), which tautomerizes to its imine form (iminobutyrate). Both intermediates are unstable and short-lived. The second step is the nonenzymatic hydrolysis of the enamine/imine intermediates to form 2-ketobutyrate and free ammonia. In the low water environment of the cell, the second step is accelerated by RidA. This chain is L-threonine dehydratase biosynthetic IlvA (ilvA), found in Staphylococcus aureus (strain Mu50 / ATCC 700699).